Reading from the N-terminus, the 483-residue chain is Myocilin (483 aa).

Residues 1 to 18 (MPTAQLLLLACLLWGLEA) form the signal peptide. Asn43 carries N-linked (GlcNAc...) asparagine glycosylation. The stretch at 51 to 162 (GQAMSAIQDL…SQEVARLRRG (112 aa)) forms a coiled coil. A disordered region spans residues 153-179 (SQEVARLRRGQCPQAHSSSQDVPAGSR). The Olfactomedin-like domain occupies 223–482 (GCGELVWVGE…MVTYDIRLSK (260 aa)). Cys224 and Cys412 are oxidised to a cystine. Positions 359, 407, 408, 456, and 457 each coordinate Ca(2+). The short motif at 481 to 483 (SKM) is the Microbody targeting signal element.

Homodimer (via N-terminus). Can also form higher oligomers. Interacts with OLFM3, FN1, NRCAM, GLDN and NFASC. Interacts (via N-terminus) with MYL2. Interacts with SFRP1, FRZB, FZD7, FZD10, FZD1 and WIF1; regulates Wnt signaling. Interacts with SNTA1; regulates muscle hypertrophy. Interacts with ERBB2 and ERBB3; activates ERBB2-ERBB3 signaling pathway. Interacts with SNCG; affects its secretion and its aggregation. In terms of processing, N-glycosylated. Post-translationally, palmitoylated. Undergoes a calcium-dependent proteolytic cleavage at Arg-205 by CAPN2 in the endoplasmic reticulum. The result is the production of two fragments, one of 35 kDa containing the C-terminal olfactomedin-like domain, and another of 20 kDa containing the N-terminal leucine zipper-like domain. As to expression, expressed in optic nerve head, ciliary body and retina.

The protein localises to the secreted. Its subcellular location is the golgi apparatus. It is found in the cytoplasmic vesicle. The protein resides in the extracellular space. It localises to the extracellular matrix. The protein localises to the extracellular exosome. Its subcellular location is the mitochondrion. It is found in the mitochondrion intermembrane space. The protein resides in the mitochondrion inner membrane. It localises to the mitochondrion outer membrane. The protein localises to the rough endoplasmic reticulum. Its subcellular location is the cell projection. It is found in the cilium. The protein resides in the endoplasmic reticulum. In terms of biological role, secreted glycoprotein regulating the activation of different signaling pathways in adjacent cells to control different processes including cell adhesion, cell-matrix adhesion, cytoskeleton organization and cell migration. Promotes substrate adhesion, spreading and formation of focal contacts. Negatively regulates cell-matrix adhesion and stress fiber assembly through Rho protein signal transduction. Modulates the organization of actin cytoskeleton by stimulating the formation of stress fibers through interactions with components of Wnt signaling pathways. Promotes cell migration through activation of PTK2 and the downstream phosphatidylinositol 3-kinase signaling. Plays a role in bone formation and promotes osteoblast differentiation in a dose-dependent manner through mitogen-activated protein kinase signaling. Mediates myelination in the peripheral nervous system through ERBB2/ERBB3 signaling. Plays a role as a regulator of muscle hypertrophy through the components of dystrophin-associated protein complex. Involved in positive regulation of mitochondrial depolarization. Plays a role in neurite outgrowth. May participate in the obstruction of fluid outflow in the trabecular meshwork. The sequence is that of Myocilin (MYOC) from Canis lupus familiaris (Dog).